The chain runs to 472 residues: PEP-dependent dihydroxyacetone kinase, phosphoryl donor subunit DhaM (472 aa).

Residues 1–135 form the PTS EIIA type-4 domain; it reads MVNLVIVSHS…NALEAKRVQL (135 aa). Histidine 9 acts as the Tele-phosphohistidine intermediate in catalysis. Residues 156–243 enclose the HPr domain; the sequence is ARSVSVVIQN…ALAAENFGEP (88 aa). The Pros-phosphohistidine intermediate role is filled by histidine 170. Positions 266–472 are PTS EI-like, N-terminal part; that stretch reads PQPQDRISRE…DIPGKRVIRG (207 aa). The active-site Tele-phosphohistidine intermediate is the histidine 432.

This sequence belongs to the PEP-utilizing enzyme family. In terms of assembly, homodimer. The dihydroxyacetone kinase complex is composed of a homodimer of DhaM, a homodimer of DhaK and the subunit DhaL.

The enzyme catalyses dihydroxyacetone + phosphoenolpyruvate = dihydroxyacetone phosphate + pyruvate. In terms of biological role, component of the dihydroxyacetone kinase complex, which is responsible for the phosphoenolpyruvate (PEP)-dependent phosphorylation of dihydroxyacetone. DhaM serves as the phosphoryl donor. Is phosphorylated by phosphoenolpyruvate in an EI- and HPr-dependent reaction, and a phosphorelay system on histidine residues finally leads to phosphoryl transfer to DhaL and dihydroxyacetone. The protein is PEP-dependent dihydroxyacetone kinase, phosphoryl donor subunit DhaM of Klebsiella michiganensis (strain ATCC 8724 / DSM 4798 / JCM 20051 / NBRC 3318 / NRRL B-199 / KCTC 1686 / BUCSAV 143 / CCM 1901).